Reading from the N-terminus, the 288-residue chain is UDP-3-O-acyl-N-acetylglucosamine deacetylase (288 aa).

Residues histidine 79, histidine 236, and aspartate 240 each coordinate Zn(2+). The active-site Proton donor is histidine 263.

It belongs to the LpxC family. Zn(2+) serves as cofactor.

The catalysed reaction is a UDP-3-O-[(3R)-3-hydroxyacyl]-N-acetyl-alpha-D-glucosamine + H2O = a UDP-3-O-[(3R)-3-hydroxyacyl]-alpha-D-glucosamine + acetate. It participates in glycolipid biosynthesis; lipid IV(A) biosynthesis; lipid IV(A) from (3R)-3-hydroxytetradecanoyl-[acyl-carrier-protein] and UDP-N-acetyl-alpha-D-glucosamine: step 2/6. Functionally, catalyzes the hydrolysis of UDP-3-O-myristoyl-N-acetylglucosamine to form UDP-3-O-myristoylglucosamine and acetate, the committed step in lipid A biosynthesis. This chain is UDP-3-O-acyl-N-acetylglucosamine deacetylase, found in Rickettsia africae (strain ESF-5).